Reading from the N-terminus, the 146-residue chain is UPF0735 ACT domain-containing protein Teth514_2312 (146 aa).

Residues 71–146 form the ACT domain; that stretch reads TLSMVLDHMP…GVRKIEILGE (76 aa).

It belongs to the UPF0735 family.

The protein is UPF0735 ACT domain-containing protein Teth514_2312 of Thermoanaerobacter sp. (strain X514).